An 856-amino-acid polypeptide reads, in one-letter code: V-type proton ATPase 116 kDa subunit a 2 (856 aa).

At 1-393 (MGSLFRSESM…DAYGVGSYRE (393 aa)) the chain is on the cytoplasmic side. The chain crosses the membrane as a helical span at residues 394 to 412 (VNPALFTIITFPFLFAVMF). At 413-414 (GD) the chain is on the vacuolar side. Residues 415 to 431 (FGHGFVMFLFALLLVLN) form a helical membrane-spanning segment. The Cytoplasmic portion of the chain corresponds to 432-445 (ENHPRLSQSQEILR). A helical transmembrane segment spans residues 446–475 (MFFDGRYILLLMGLFSVYTGLIYNDCFSKS). The Vacuolar segment spans residues 476 to 549 (VNLFGSGWNV…ATNRLTFLNS (74 aa)). Residues 550–569 (FKMKMSVILGIFHMTFGVVL) traverse the membrane as a helical segment. Residues 570-587 (GIFNHLHFRKKFNVYLVS) are Cytoplasmic-facing. A helical membrane pass occupies residues 588-608 (VPEILFMLCIFGYLIFMIIYK). At 609 to 651 (WLAYSAETSREAPSILIEFINMFLFPTSKTHGLYPGQAHVQRV) the chain is on the vacuolar side. The chain crosses the membrane as a helical span at residues 652-671 (LVALTVLAVPVLFLGKPLFL). Over 672-739 (LWLHNGRNCF…EILMTQAIHS (68 aa)) the chain is Cytoplasmic. Residues Ser695 and Ser700 each carry the phosphoserine modification. Residues 740-764 (IEYCLGCISNTASYLRLWALSLAHA) form a helical membrane-spanning segment. The Vacuolar segment spans residues 765-785 (QLSDVLWAMLMRVGLRVDTTY). Residues 786 to 824 (GVLLLLPVMAFFAVLTIFILLVMEGLSAFLHAIRLHWVE) form a helical membrane-spanning segment. Residues 825 to 856 (FQNKFYVGAGTKFVPFSFSLLSSKFSNDDSIA) lie on the Cytoplasmic side of the membrane.

This sequence belongs to the V-ATPase 116 kDa subunit family. V-ATPase is a heteromultimeric enzyme made up of two complexes: the ATP-hydrolytic V1 complex and the proton translocation V0 complex. The V1 complex consists of three catalytic AB heterodimers that form a heterohexamer, three peripheral stalks each consisting of EG heterodimers, one central rotor including subunits D and F, and the regulatory subunits C and H. The proton translocation complex V0 consists of the proton transport subunit a, a ring of proteolipid subunits c9c'', rotary subunit d, subunits e and f, and the accessory subunits ATP6AP1/Ac45 and ATP6AP2/PRR. Directly interacts with PSCD2 through its N-terminal cytosolic tail in an intra-endosomal acidification-dependent manner. Disruption of this interaction results in the inhibition of endocytosis. Interacts with SPAAR. As to expression, relatively high expression in kidney and liver. Lower levels in the spleen, testis, and skeletal muscle. Also expressed in the thymus.

It localises to the cell membrane. Its subcellular location is the endosome membrane. Subunit of the V0 complex of vacuolar(H+)-ATPase (V-ATPase), a multisubunit enzyme composed of a peripheral complex (V1) that hydrolyzes ATP and a membrane integral complex (V0) that translocates protons. V-ATPase is responsible for acidifying and maintaining the pH of intracellular compartments and in some cell types, is targeted to the plasma membrane, where it is responsible for acidifying the extracellular environment. Essential component of the endosomal pH-sensing machinery. May play a role in maintaining the Golgi functions, such as glycosylation maturation, by controlling the Golgi pH. In aerobic conditions, involved in intracellular iron homeostasis, thus triggering the activity of Fe(2+) prolyl hydroxylase (PHD) enzymes, and leading to HIF1A hydroxylation and subsequent proteasomal degradation. The protein is V-type proton ATPase 116 kDa subunit a 2 (Atp6v0a2) of Mus musculus (Mouse).